We begin with the raw amino-acid sequence, 366 residues long: MAGNTFGKLFTLSTFGESHGIAIGGVIDGCPPGLEISEADLQVDLDRRKPGTSRYTTARREEDEVQILSGVFEGKTTGTSIGLLIKNTDQRSNDYSKIKDTFRPGHADYTYQQKYGLRDYRGGGRSSARETAIRVAAGGVAKKFLKTHLGIEVRGYLSKLGPIKIDKVDHSVTNTNAFFCPDESKLEALDDYMRDLKKQGDSIGAKVSVVATNMPVGLGEPIFDRLDADLAHAMMGINAVKGVEVGDGFDTVEQKGSEHRDLMSADGFKSNRSGGVLGGISSGQDLVVHMALKPTSSISVPGESIDINGETAEVVTKGRHDPCVGIRAVPIAEAMMALVLMDHYLRHRGQNADVQSITPVIPAQSK.

2 residues coordinate NADP(+): arginine 48 and arginine 54. FMN is bound by residues 125 to 127 (RSS), 238 to 239 (NA), glycine 278, 293 to 297 (KPTSS), and arginine 319.

The protein belongs to the chorismate synthase family. Homotetramer. It depends on FMNH2 as a cofactor.

The enzyme catalyses 5-O-(1-carboxyvinyl)-3-phosphoshikimate = chorismate + phosphate. Its pathway is metabolic intermediate biosynthesis; chorismate biosynthesis; chorismate from D-erythrose 4-phosphate and phosphoenolpyruvate: step 7/7. Its function is as follows. Catalyzes the anti-1,4-elimination of the C-3 phosphate and the C-6 proR hydrogen from 5-enolpyruvylshikimate-3-phosphate (EPSP) to yield chorismate, which is the branch point compound that serves as the starting substrate for the three terminal pathways of aromatic amino acid biosynthesis. This reaction introduces a second double bond into the aromatic ring system. This chain is Chorismate synthase, found in Pseudoalteromonas atlantica (strain T6c / ATCC BAA-1087).